We begin with the raw amino-acid sequence, 128 residues long: Glycine cleavage system H protein (128 aa).

The region spanning Val-24–Arg-106 is the Lipoyl-binding domain. At Lys-65 the chain carries N6-lipoyllysine.

This sequence belongs to the GcvH family. As to quaternary structure, the glycine cleavage system is composed of four proteins: P, T, L and H. Requires (R)-lipoate as cofactor.

The glycine cleavage system catalyzes the degradation of glycine. The H protein shuttles the methylamine group of glycine from the P protein to the T protein. The sequence is that of Glycine cleavage system H protein from Edwardsiella ictaluri (strain 93-146).